A 376-amino-acid polypeptide reads, in one-letter code: S-adenosylmethionine synthase (376 aa).

An ATP-binding site is contributed by His15. Asp17 contributes to the Mg(2+) binding site. Glu43 contributes to the K(+) binding site. L-methionine is bound by residues Glu56 and Gln92. The flexible loop stretch occupies residues 92–102 (QSKEIANQVDR). ATP is bound by residues 156–158 (DMK), Asp231, 237–238 (RK), Ala254, and Lys258. Asp231 is an L-methionine binding site. Lys262 is a binding site for L-methionine.

It belongs to the AdoMet synthase family. As to quaternary structure, homotetramer; dimer of dimers. Mg(2+) is required as a cofactor. It depends on K(+) as a cofactor.

The protein localises to the cytoplasm. The catalysed reaction is L-methionine + ATP + H2O = S-adenosyl-L-methionine + phosphate + diphosphate. The protein operates within amino-acid biosynthesis; S-adenosyl-L-methionine biosynthesis; S-adenosyl-L-methionine from L-methionine: step 1/1. In terms of biological role, catalyzes the formation of S-adenosylmethionine (AdoMet) from methionine and ATP. The overall synthetic reaction is composed of two sequential steps, AdoMet formation and the subsequent tripolyphosphate hydrolysis which occurs prior to release of AdoMet from the enzyme. The protein is S-adenosylmethionine synthase of Mycoplasmopsis pulmonis (strain UAB CTIP) (Mycoplasma pulmonis).